The sequence spans 193 residues: Molybdopterin synthase catalytic subunit (193 aa).

Substrate contacts are provided by residues 118 to 119 (HR), lysine 134, and 141 to 143 (KKE). Positions 159 to 193 (DRTTTDGTTASSPAPATRPAKGGGCCGRKVRVNES) are disordered. A compositionally biased stretch (low complexity) spans 163-178 (TDGTTASSPAPATRPA).

The protein belongs to the MoaE family. MOCS2B subfamily. Heterotetramer; composed of 2 small (MOCS2A) and 2 large (MOCS2B) subunits.

The protein localises to the cytoplasm. It carries out the reaction 2 [molybdopterin-synthase sulfur-carrier protein]-C-terminal-Gly-aminoethanethioate + cyclic pyranopterin phosphate + H2O = molybdopterin + 2 [molybdopterin-synthase sulfur-carrier protein]-C-terminal Gly-Gly + 2 H(+). Its pathway is cofactor biosynthesis; molybdopterin biosynthesis. Its function is as follows. Catalytic subunit of the molybdopterin synthase complex, a complex that catalyzes the conversion of precursor Z into molybdopterin. Acts by mediating the incorporation of 2 sulfur atoms from thiocarboxylated MOCS2A into precursor Z to generate a dithiolene group. This is Molybdopterin synthase catalytic subunit from Oryza sativa subsp. japonica (Rice).